A 176-amino-acid chain; its full sequence is dCTP deaminase (176 aa).

Residues 102-107 and Asp118 contribute to the dCTP site; that span reads RSTFAR. The active-site Proton donor/acceptor is the Glu128. DCTP-binding residues include Tyr160 and Gln167.

Belongs to the dCTP deaminase family. As to quaternary structure, homotrimer.

The enzyme catalyses dCTP + H2O + H(+) = dUTP + NH4(+). It functions in the pathway pyrimidine metabolism; dUMP biosynthesis; dUMP from dCTP (dUTP route): step 1/2. Functionally, catalyzes the deamination of dCTP to dUTP. This is dCTP deaminase from Hyperthermus butylicus (strain DSM 5456 / JCM 9403 / PLM1-5).